A 283-amino-acid chain; its full sequence is SNF1-related protein kinase regulatory subunit beta-1 (283 aa).

Basic and acidic residues predominate over residues 1–10 (MGNANGKDED). The interval 1 to 63 (MGNANGKDED…PARSPSPFLF (63 aa)) is disordered. Residue glycine 2 is the site of N-myristoyl glycine attachment. Residues 43–60 (SDSMSSSPPGSPARSPSP) show a composition bias toward low complexity. The segment at 101–178 (PTIITWNQGG…VGNVCNILDV (78 aa)) is kinase-interacting sequence (KIS). Residues 215-283 (EPLAVPPQLH…TVVLYKPLTR (69 aa)) are association with SNF1 complex (ASC).

The protein belongs to the 5'-AMP-activated protein kinase beta subunit family. As to quaternary structure, subunit of a probable heterotrimeric complex consisting of an alpha catalytic (KIN10 or KIN11) subunit, and a beta (KINB) and a gamma (KING or SNF4) non-catalytic regulatory subunits. Interacts with SNF4 and CBL1. Interacts with FLZ1, FLZ2, FLZ8, FLZ9, FLZ10, FLZ12, FLZ13, FLZ14 and FLZ15. Sumoylated by SIZ1. As to expression, expressed in vegetative organs and, to lower extent, in reproductive organs.

It localises to the cell membrane. Regulatory subunit of the probable trimeric SNF1-related protein kinase (SnRK) complex, which may play a role in a signal transduction cascade regulating gene expression and carbohydrate metabolism in higher plants. The SnRK complex may also be involved in the regulation of fatty acid synthesis by phosphorylation of acetyl-CoA carboxylase and in assimilation of nitrogen by phosphorylating nitrate reductase. In Arabidopsis thaliana (Mouse-ear cress), this protein is SNF1-related protein kinase regulatory subunit beta-1 (KINB1).